Reading from the N-terminus, the 501-residue chain is Cytochrome P450 4c21 (501 aa).

2 residues coordinate heme: Glu-309 and Cys-447.

Belongs to the cytochrome P450 family. The cofactor is heme.

It is found in the endoplasmic reticulum membrane. The protein resides in the microsome membrane. The catalysed reaction is an organic molecule + reduced [NADPH--hemoprotein reductase] + O2 = an alcohol + oxidized [NADPH--hemoprotein reductase] + H2O + H(+). In Blattella germanica (German cockroach), this protein is Cytochrome P450 4c21 (CYP4C21).